Reading from the N-terminus, the 493-residue chain is UDP-N-acetylmuramoyl-L-alanyl-D-glutamate--2,6-diaminopimelate ligase (493 aa).

UDP-N-acetyl-alpha-D-muramoyl-L-alanyl-D-glutamate is bound at residue threonine 32. 110–116 (GTNGKTT) contributes to the ATP binding site. Residues asparagine 151, 152–153 (TT), serine 179, and arginine 187 each bind UDP-N-acetyl-alpha-D-muramoyl-L-alanyl-D-glutamate. Residue lysine 219 is modified to N6-carboxylysine. Meso-2,6-diaminopimelate is bound by residues arginine 386, 410 to 413 (DNPR), glycine 460, and glutamate 464. Positions 410-413 (DNPR) match the Meso-diaminopimelate recognition motif motif.

This sequence belongs to the MurCDEF family. MurE subfamily. Requires Mg(2+) as cofactor. In terms of processing, carboxylation is probably crucial for Mg(2+) binding and, consequently, for the gamma-phosphate positioning of ATP.

It is found in the cytoplasm. It carries out the reaction UDP-N-acetyl-alpha-D-muramoyl-L-alanyl-D-glutamate + meso-2,6-diaminopimelate + ATP = UDP-N-acetyl-alpha-D-muramoyl-L-alanyl-gamma-D-glutamyl-meso-2,6-diaminopimelate + ADP + phosphate + H(+). The protein operates within cell wall biogenesis; peptidoglycan biosynthesis. Its function is as follows. Catalyzes the addition of meso-diaminopimelic acid to the nucleotide precursor UDP-N-acetylmuramoyl-L-alanyl-D-glutamate (UMAG) in the biosynthesis of bacterial cell-wall peptidoglycan. This Lactiplantibacillus plantarum (strain ATCC BAA-793 / NCIMB 8826 / WCFS1) (Lactobacillus plantarum) protein is UDP-N-acetylmuramoyl-L-alanyl-D-glutamate--2,6-diaminopimelate ligase.